A 179-amino-acid polypeptide reads, in one-letter code: Cytochrome c-type biogenesis protein CcmE (179 aa).

Residues Met1 to Arg8 are Cytoplasmic-facing. The helical; Signal-anchor for type II membrane protein transmembrane segment at Met9–Ala29 threads the bilayer. The Periplasmic portion of the chain corresponds to Leu30 to Lys179. Heme-binding residues include His131 and Tyr135. The tract at residues Met151–Lys179 is disordered. Over residues Leu156–Tyr169 the composition is skewed to basic and acidic residues. A compositionally biased stretch (polar residues) spans Gln170–Lys179.

The protein belongs to the CcmE/CycJ family.

It localises to the cell inner membrane. Its function is as follows. Heme chaperone required for the biogenesis of c-type cytochromes. Transiently binds heme delivered by CcmC and transfers the heme to apo-cytochromes in a process facilitated by CcmF and CcmH. In Pasteurella multocida (strain Pm70), this protein is Cytochrome c-type biogenesis protein CcmE.